The chain runs to 959 residues: Protein SEY1 homolog 1 (959 aa).

Over 1–767 (MQESDVFHNQ…ELAAITVHSK (767 aa)) the chain is Cytoplasmic. Positions 9-86 (NQLRVEMLKK…EEEKKEKENY (78 aa)) form a coiled coil. The tract at residues 62–81 (EEKENMKVEEEEIKEEEEKK) is disordered. The region spanning 123–340 (GFNYNMLSIL…NQNTYFRPIY (218 aa)) is the GB1/RHD3-type G domain. 133-140 (GPQNSGKS) is a binding site for GTP. Residues 768-788 (TPMWLILLIAFLSFDNIVYVF) traverse the membrane as a helical segment. Residues 789–791 (KSP) lie on the Lumenal side of the membrane. A helical transmembrane segment spans residues 792–812 (TLLALTLIIIGIIYSLNKIGY). Topologically, residues 813 to 959 (AYLIDSVISY…LNKIKEANEF (147 aa)) are cytoplasmic. The disordered stretch occupies residues 849–868 (EAPKRKRPQKKTQDDKPKSS).

The protein belongs to the TRAFAC class dynamin-like GTPase superfamily. GB1/RHD3 GTPase family. RHD3 subfamily.

The protein resides in the endoplasmic reticulum membrane. Functionally, probable GTP-binding protein that may be involved in cell development. The sequence is that of Protein SEY1 homolog 1 from Entamoeba histolytica (strain ATCC 30459 / HM-1:IMSS / ABRM).